The sequence spans 405 residues: Acetate kinase (405 aa).

N7 serves as a coordination point for Mg(2+). Residue K14 coordinates ATP. R99 is a substrate binding site. The active-site Proton donor/acceptor is the D156. ATP is bound by residues 215 to 219, 290 to 292, and 338 to 342; these read HLGNG, DMR, and GVGEH. E391 lines the Mg(2+) pocket.

It belongs to the acetokinase family. Homodimer. The cofactor is Mg(2+). Requires Mn(2+) as cofactor.

It is found in the cytoplasm. It carries out the reaction acetate + ATP = acetyl phosphate + ADP. The protein operates within metabolic intermediate biosynthesis; acetyl-CoA biosynthesis; acetyl-CoA from acetate: step 1/2. Catalyzes the formation of acetyl phosphate from acetate and ATP. Can also catalyze the reverse reaction. The polypeptide is Acetate kinase (Nostoc punctiforme (strain ATCC 29133 / PCC 73102)).